The sequence spans 246 residues: MKYDIIGDIHGCLQEFQNLTEKLGYNWSSGLPVHPDQRKLAFVGDITDRGPHSLRMIEIVWELVIHKKEAYYAPGNHCNKLYRFFLGRNVTVAHGLETTVAEYEALPSHKQNMIKEKFITLYEQSPLYHVLDEKRLLVCHAGIRQDYIGRQDKKVQTFVLYGDITGEKHADGSPVRRDWAKEYKGTTWIVYGHTPVKEPRFVNHTVNIDTGAVFGGRLTALRYPEMETVSVPSSLPFVPEKFRPIS.

It belongs to the PrpE family. Ni(2+) serves as cofactor.

It catalyses the reaction P(1),P(4)-bis(5'-guanosyl) tetraphosphate + H2O = GMP + GTP + 2 H(+). Functionally, asymmetrically hydrolyzes Ap4p to yield AMP and ATP. This chain is Bis(5'-nucleosyl)-tetraphosphatase PrpE [asymmetrical], found in Bacillus cereus (strain 03BB102).